The following is a 603-amino-acid chain: Rab proteins geranylgeranyltransferase component A (603 aa).

Ser-470 is modified (phosphoserine).

The protein belongs to the Rab GDI family.

In terms of biological role, substrate-binding subunit (component A) of the Rab geranylgeranyltransferase (GGTase) complex. Binds unprenylated Rab proteins and presents the substrate peptide to the catalytic component B. The component A is thought to be regenerated by transferring its prenylated Rab back to the donor membrane. This is Rab proteins geranylgeranyltransferase component A (MRS6) from Saccharomyces cerevisiae (strain ATCC 204508 / S288c) (Baker's yeast).